Here is a 151-residue protein sequence, read N- to C-terminus: Superoxide dismutase [Cu-Zn] 4 (151 aa).

The Cu cation site is built by His45, His47, and His62. A disulfide bridge connects residues Cys56 and Cys145. Residues His62, His70, His79, and Asp82 each coordinate Zn(2+). His120 is a Cu cation binding site.

It belongs to the Cu-Zn superoxide dismutase family. Homodimer. The cofactor is Cu cation. Zn(2+) serves as cofactor.

Its subcellular location is the cytoplasm. It carries out the reaction 2 superoxide + 2 H(+) = H2O2 + O2. In terms of biological role, destroys radicals which are normally produced within the cells and which are toxic to biological systems. Protects spores from cellular damage caused by UV LIGHT. The chain is Superoxide dismutase [Cu-Zn] 4 (sodD) from Dictyostelium discoideum (Social amoeba).